The sequence spans 286 residues: Protein MGF 360-3L (286 aa).

The chain crosses the membrane as a helical span at residues 1–17; sequence MKVLLELLLGYSVLILA. N-linked (GlcNAc...) asparagine; by host glycosylation occurs at N61. Helical transmembrane passes span 128-148 and 153-173; these read HCCFYLVFSIAFVGYIVFVYN and LNTTMKLLALLSILIWLSQPA. 2 N-linked (GlcNAc...) asparagine; by host glycosylation sites follow: N238 and N263.

It belongs to the asfivirus MGF 110 family.

Its subcellular location is the host membrane. In terms of biological role, plays a role in virus cell tropism, and may be required for efficient virus replication in macrophages. The protein is Protein MGF 360-3L of African swine fever virus (isolate Tick/Malawi/Lil 20-1/1983) (ASFV).